The primary structure comprises 265 residues: Enolase-phosphatase E1 (265 aa).

Mg(2+) is bound by residues Asp18 and Glu20. Substrate is bound by residues Ser144–Ser145 and Lys188. Asp215 is a binding site for Mg(2+).

Belongs to the HAD-like hydrolase superfamily. MasA/MtnC family. As to quaternary structure, monomer. Mg(2+) serves as cofactor.

Its subcellular location is the cytoplasm. It localises to the nucleus. It catalyses the reaction 5-methylsulfanyl-2,3-dioxopentyl phosphate + H2O = 1,2-dihydroxy-5-(methylsulfanyl)pent-1-en-3-one + phosphate. Its pathway is amino-acid biosynthesis; L-methionine biosynthesis via salvage pathway; L-methionine from S-methyl-5-thio-alpha-D-ribose 1-phosphate: step 3/6. It participates in amino-acid biosynthesis; L-methionine biosynthesis via salvage pathway; L-methionine from S-methyl-5-thio-alpha-D-ribose 1-phosphate: step 4/6. Bifunctional enzyme that catalyzes the enolization of 2,3-diketo-5-methylthiopentyl-1-phosphate (DK-MTP-1-P) into the intermediate 2-hydroxy-3-keto-5-methylthiopentenyl-1-phosphate (HK-MTPenyl-1-P), which is then dephosphorylated to form the acireductone 1,2-dihydroxy-3-keto-5-methylthiopentene (DHK-MTPene). This Candida albicans (strain SC5314 / ATCC MYA-2876) (Yeast) protein is Enolase-phosphatase E1.